A 169-amino-acid chain; its full sequence is MITIGKIGKPYGILGWFHMFSYTEKKNNIFNYFPWKLEKSNILLYKNNIIHYKTHTDHFLIKIKDINNRTQTLNFIKQNILIKNFQLPKLKNKEYYWNDIFSCYIFDLKKKKIGSIKNIIDNKFYCTLEILYKKKKIYIPFIQPNFIKKIDIKKKIIVIDLTNLNNQLI.

One can recognise a PRC barrel domain in the interval 92–166 (NKEYYWNDIF…IVIDLTNLNN (75 aa)).

This sequence belongs to the RimM family. Binds ribosomal protein uS19.

The protein resides in the cytoplasm. Functionally, an accessory protein needed during the final step in the assembly of 30S ribosomal subunit, possibly for assembly of the head region. Essential for efficient processing of 16S rRNA. May be needed both before and after RbfA during the maturation of 16S rRNA. It has affinity for free ribosomal 30S subunits but not for 70S ribosomes. The chain is Ribosome maturation factor RimM from Buchnera aphidicola subsp. Cinara cedri (strain Cc).